A 921-amino-acid chain; its full sequence is MEYKNTLLMPKTEFPMRGNLPKREPAIQEKWAEMNIYEKVQERTKGRPLFVLHDGPPYANGDIHMGHALNKVLKDFIVRYKSMTGYCAPYVPGWDTHGLPIEQALTNKGVKRKEMPVAEFRKLCAEYAYEQVNRQREQFKRLGVRADWDHPYITLEPAYEAQQIKVFGEMAKKGYIYKGQKPVYWSPTSESALAEAEIEYKDKKSASIYVAFEVKDGKDVLEGDEKFIIWTTTPWTLPANLGISVHPKLEYSIVKVNDEKYIIASDLFDTVAKTLEWENPEVVRTVKGSELEYTVAKHPFYDRDSLVMLGEHVTTDAGTGCVHTAPGHGEDDFIVGQKYGLEVLCPVDDKGVLTSEAPGFEGLFYDKANKPITEKLEEVGALLKLTFITHSYPHDWRTKKPIIFRATAQWFASIEAFRSELLQAVKETKWVPAWGETRLHNMVRDRGDWCISRQRAWGVPIPVFYAENNDPIITDETINHVANLFREHGSNVWFEREAKDLLPEGFTHPSSPNGEFRKETDIMDVWFDSGSSHQAVLEERDDLQRPADLYLEGSDQYRGWFNSSLSTAVAVTGKAPYKGVLSHGFVLDGEGRKMSKSIGNIVVPKKIMDQLGGDILRLWVSSVDYQSDVRISDDILKQVAEVYRKIRNTFRFLLGNLADFNPAQDAVAKAELREVDRYMLVKLNDLITKVKEAYETYDFAAVYHAIHNFCTIDLSSFYLDFAKDILYIEAANHHDRRAIQTVLYDVLVALTKLVTPILPHTADEVWPYIPGVTEESVQLTDMPEAIELQDGEALKTKWDAFMTLRSDVLKALEVARNEKVIGKSLTASITLFPTAEMKEMLESIQEDLKQLFIVSEYKLGGTIEEAPADAQKYEHTAVLVTQANGETCERCWVVSETVGNDNEYKTLCERCATVVKENYVK.

The short motif at 57-67 is the 'HIGH' region element; it reads PYANGDIHMGH. E552 is an L-isoleucyl-5'-AMP binding site. Residues 593-597 carry the 'KMSKS' region motif; it reads KMSKS. K596 is an ATP binding site. The Zn(2+) site is built by C888, C891, C908, and C911.

This sequence belongs to the class-I aminoacyl-tRNA synthetase family. IleS type 1 subfamily. Monomer. The cofactor is Zn(2+).

It is found in the cytoplasm. It catalyses the reaction tRNA(Ile) + L-isoleucine + ATP = L-isoleucyl-tRNA(Ile) + AMP + diphosphate. In terms of biological role, catalyzes the attachment of isoleucine to tRNA(Ile). As IleRS can inadvertently accommodate and process structurally similar amino acids such as valine, to avoid such errors it has two additional distinct tRNA(Ile)-dependent editing activities. One activity is designated as 'pretransfer' editing and involves the hydrolysis of activated Val-AMP. The other activity is designated 'posttransfer' editing and involves deacylation of mischarged Val-tRNA(Ile). This chain is Isoleucine--tRNA ligase, found in Bacillus cytotoxicus (strain DSM 22905 / CIP 110041 / 391-98 / NVH 391-98).